Consider the following 395-residue polypeptide: GA-binding protein subunit beta-1 (395 aa).

Ser-2 carries the post-translational modification N-acetylserine. ANK repeat units follow at residues 5–34 (DLGK…PFTT) and 37–66 (LGTS…SRDA). Residue Lys-69 is modified to N6-acetyllysine. 3 ANK repeats span residues 70–99 (VDRT…DVNA), 103–132 (LKMT…DVHT), and 136–166 (FCKT…QINT). Positions 258–327 (DGAIQQVVSS…ETVISEEPPA (70 aa)) are transcription activation and HCFC1 interaction. An N6-acetyllysine mark is found at Lys-352 and Lys-381.

Heterotetramer of two alpha and two beta subunits. Interacts with HCFC1, causing repression of transcriptional activity. Acetylated by EP300/p300. Deacetylated by SIRT7, promoting heterotetramerization and activity.

The protein resides in the nucleus. Transcription factor capable of interacting with purine rich repeats (GA repeats). Acts as a master regulator of nuclear-encoded mitochondrial genes. In terms of biological role, (Microbial infection) Necessary for the expression of the Adenovirus E4 gene. The sequence is that of GA-binding protein subunit beta-1 (GABPB1) from Homo sapiens (Human).